Here is a 235-residue protein sequence, read N- to C-terminus: MNANIRLLKYIVGVSSALFLIFSLISLFETIQNEKLYERDICFDSQCLKFFAEKTSGIVMYFQAFGWLITTFVTVFGVMIALMTYNAGVKNNNNSNYTSHLTMFREFASAELTKRSSIYPEKVNFFRWYRVMFPEAQGGDISVSRDYLEIISRIKCVIEEANAHITEENKDYKYKTHQRKMMAVLDEIGISISNGPKNIFIEVESQILDYIDTINLSFCHSSSVIELSRVKRKYI.

Transmembrane regions (helical) follow at residues 11 to 31 and 64 to 84; these read IVGVSSALFLIFSLISLFETI and AFGWLITTFVTVFGVMIALMT.

It is found in the cell inner membrane. In terms of biological role, membrane component of antiviral defense system Retron Ec48, composed of a non-coding RNA (ncRNA), a reverse transcriptase (RT) and this membrane protein. Expression of this retron confers protection against bacteriophages lambda, T2, T4, T5 and T7. At multiplicity of infection (MOI) of 0.02 cultures grow normally when infected with lambda without collapsing, at MOI 2 cultures enter growth stasis. At MOI 3 cell membranes are permeabilized within 15 minutes of infection but do not lyse, suggesting the phage are not able to finish a replication cycle. Antiviral defense is suppressed by mutations that knockout the lambda gam expression or phage T7 gp5.9 expression; both viral genes inhibit host RecBCD. The Ec48 retron may sense the integrity of the RecBCD enzyme; when RecBCD is perturbed by viral proteins the Ec48 effector (the membrane protein) is activated, leading to abortive infection and bacterial growth arrest. This Escherichia coli protein is Retron Ec48 transmembrane protein.